Consider the following 530-residue polypeptide: UDP-glucuronosyltransferase 1A8 (530 aa).

Residues 1–25 (MARTGWTSPIPLCVSLLLTCGFAEA) form the signal peptide. 3 N-linked (GlcNAc...) asparagine glycosylation sites follow: asparagine 71, asparagine 292, and asparagine 344. The chain crosses the membrane as a helical span at residues 488–504 (VIGFLLAVVLTVAFITF).

Belongs to the UDP-glycosyltransferase family. In terms of assembly, homodimer. Homooligomer. Interacts with UGT1A1, UGT1A3, UGT1A4, UGT1A6, UGT1A7, UGT1A9 and UGT1A10 to form heterodimers. Isoform 1 interacts with isoform 2/i2 suggesting that oligomerization is involved in negative regulation of transferase activity by isoform 2. Isoform 1 also interacts with respective i2 isoforms of UGT1A1, UGT1A3, UGT1A4, UGT1A6, UGT1A7, UGT1A9 and UGT1A10. Expressed in kidney, colon and small intestine. Not expressed in liver. In terms of tissue distribution, expressed in liver, kidney, colon and small intestine.

It localises to the endoplasmic reticulum membrane. It catalyses the reaction glucuronate acceptor + UDP-alpha-D-glucuronate = acceptor beta-D-glucuronoside + UDP + H(+). It carries out the reaction 17beta-estradiol + UDP-alpha-D-glucuronate = 17beta-estradiol 3-O-(beta-D-glucuronate) + UDP + H(+). The enzyme catalyses 17alpha-estradiol + UDP-alpha-D-glucuronate = 17alpha-estradiol 3-O-(beta-D-glucuronate) + UDP + H(+). The catalysed reaction is estrone + UDP-alpha-D-glucuronate = estrone 3-O-(beta-D-glucuronate) + UDP + H(+). It catalyses the reaction 16alpha,17alpha-estriol + UDP-alpha-D-glucuronate = 16alpha,17alpha-estriol 3-O-(beta-D-glucuronate) + UDP + H(+). It carries out the reaction 2-hydroxy-17beta-estradiol + UDP-alpha-D-glucuronate = 2-hydroxy-17beta-estradiol 3-O-(beta-D-glucuronate) + UDP + H(+). The enzyme catalyses 2-hydroxy-17beta-estradiol + UDP-alpha-D-glucuronate = 17beta-estradiol 2-O-(beta-D-glucuronate) + UDP + H(+). The catalysed reaction is 2-hydroxyestrone + UDP-alpha-D-glucuronate = 2-hydroxyestrone 3-O-(beta-D-glucuronate) + UDP + H(+). It catalyses the reaction 4-hydroxy-17beta-estradiol + UDP-alpha-D-glucuronate = 4-hydroxy-17beta-estradiol 3-O-(beta-D-glucuronate) + UDP + H(+). It carries out the reaction 4-hydroxy-17beta-estradiol + UDP-alpha-D-glucuronate = 17beta-estradiol 4-O-(beta-D-glucuronate) + UDP + H(+). The enzyme catalyses 4-hydroxyestrone + UDP-alpha-D-glucuronate = 4-hydroxyestrone 3-O-(beta-D-glucuronate) + UDP + H(+). The catalysed reaction is 4-hydroxyestrone + UDP-alpha-D-glucuronate = estrone 4-O-(beta-D-glucuronate) + UDP + H(+). It catalyses the reaction 2-methoxy-17beta-estradiol + UDP-alpha-D-glucuronate = 2-methoxy-17beta-estradiol 3-O-(beta-D-glucuronate) + UDP + H(+). It carries out the reaction 2-methoxyestrone + UDP-alpha-D-glucuronate = 2-methoxyestrone 3-O-(beta-D-glucuronate) + UDP + H(+). The enzyme catalyses 4-methoxy-17beta-estradiol + UDP-alpha-D-glucuronate = 4-methoxy-17beta-estradiol 3-O-(beta-D-glucuronate) + UDP + H(+). The catalysed reaction is 4-methoxyestrone + UDP-alpha-D-glucuronate = 4-methoxyestrone 3-O-(beta-D-glucuronate) + UDP + H(+). It catalyses the reaction 17beta-hydroxy-5alpha-androstan-3-one + UDP-alpha-D-glucuronate = 5alpha-dihydrotestosterone 17-O-(beta-D-glucuronate) + UDP + H(+). It carries out the reaction 5alpha-dihydrotestosterone 17-O-(beta-D-glucuronate) + UDP-alpha-D-glucuronate = 5alpha-dihydrotestosterone 17-O-[beta-D-glucuronosyl-(1-&gt;2)-glucuronate] + UDP + H(+). The enzyme catalyses prunetin + UDP-alpha-D-glucuronate = prunetin-4'-O-beta-D-glucuronide + UDP. The catalysed reaction is prunetin + UDP-alpha-D-glucuronate = prunetin-5-O-beta-D-glucuronide + UDP. It catalyses the reaction candesartan + UDP-alpha-D-glucuronate = candesartan O-beta-D-glucuronoside + UDP. It carries out the reaction mycophenolate + UDP-alpha-D-glucuronate = mycophenolate 7-O-beta-D-glucuronide + UDP + H(+). The enzyme catalyses (E)-ferulate + UDP-alpha-D-glucuronate = (E)-4-O-(beta-D-glucuronosyl)-ferulate + UDP + H(+). The catalysed reaction is (E)-ferulate + UDP-alpha-D-glucuronate = (E)-ferulic acid beta-D-glucuronate ester + UDP. In terms of biological role, UDP-glucuronosyltransferase (UGT) that catalyzes phase II biotransformation reactions in which lipophilic substrates are conjugated with glucuronic acid to increase the metabolite's water solubility, thereby facilitating excretion into either the urine or bile. Essential for the elimination and detoxification of drugs, xenobiotics and endogenous compounds. Catalyzes the glucuronidation of endogenous steroid hormones such as androgens and estrogens. Produces dihydrotestosterone (DHT) diglucuronide from the DHT after two subsequent glucoronidation steps. Involved in the glucuronidation of the phytochemical ferulic acid at the phenolic or the carboxylic acid group. Also catalyzes the glucuronidation of the isoflavones genistein, daidzein, glycitein, formononetin, biochanin A and prunetin, which are phytoestrogens with anticancer and cardiovascular properties. Involved in the glucuronidation of the AGTR1 angiotensin receptor antagonist caderastan, a drug which can inhibit the effect of angiotensin II. Also metabolizes mycophenolate, an immunosuppressive agent. Functionally, lacks UGT glucuronidation activity but acts as a negative regulator of isoform 1. The sequence is that of UDP-glucuronosyltransferase 1A8 from Homo sapiens (Human).